The following is a 752-amino-acid chain: Probable beta-glucosidase D (752 aa).

Residues 1–18 form the signal peptide; sequence MRFVSLAVGAALLGAAGA. N-linked (GlcNAc...) asparagine glycosylation is found at Asn-187 and Asn-237. Residue Asp-265 is part of the active site. Residues Asn-299, Asn-343, Asn-441, Asn-510, Asn-532, Asn-571, Asn-586, Asn-638, Asn-661, and Asn-743 are each glycosylated (N-linked (GlcNAc...) asparagine).

This sequence belongs to the glycosyl hydrolase 3 family.

Its subcellular location is the secreted. The enzyme catalyses Hydrolysis of terminal, non-reducing beta-D-glucosyl residues with release of beta-D-glucose.. It participates in glycan metabolism; cellulose degradation. Functionally, beta-glucosidases are one of a number of cellulolytic enzymes involved in the degradation of cellulosic biomass. Catalyzes the last step releasing glucose from the inhibitory cellobiose. The chain is Probable beta-glucosidase D (bglD) from Aspergillus oryzae (strain ATCC 42149 / RIB 40) (Yellow koji mold).